The following is a 225-amino-acid chain: Uracil-DNA glycosylase (225 aa).

Asp65 (proton acceptor) is an active-site residue.

The protein belongs to the uracil-DNA glycosylase (UDG) superfamily. UNG family.

The protein resides in the cytoplasm. It catalyses the reaction Hydrolyzes single-stranded DNA or mismatched double-stranded DNA and polynucleotides, releasing free uracil.. Excises uracil residues from the DNA which can arise as a result of misincorporation of dUMP residues by DNA polymerase or due to deamination of cytosine. The sequence is that of Uracil-DNA glycosylase from Clostridium perfringens (strain 13 / Type A).